The following is a 114-amino-acid chain: U17-barytoxin-Tl1d (114 aa).

Positions 1–20 (MKTIIVFLSLLVLATKFGDA) are cleaved as a signal peptide. Positions 21–74 (NEGVNQEQMKEVIQNEFREDFLNEMAPMSLLQQLEAIESTLLEKEADRNSRQKR) are excised as a propeptide. 3 disulfide bridges follow: C75-C88, C82-C93, and C87-C108.

This sequence belongs to the neurotoxin 14 (magi-1) family. 03 (ICK-30-40) subfamily. In terms of tissue distribution, expressed by the venom gland.

It is found in the secreted. Ion channel inhibitor. The chain is U17-barytoxin-Tl1d from Trittame loki (Brush-footed trapdoor spider).